The primary structure comprises 161 residues: Cytochrome c-type biogenesis protein CcmE (161 aa).

Topologically, residues 1–8 (MNPRRKKR) are cytoplasmic. The helical; Signal-anchor for type II membrane protein transmembrane segment at 9–29 (LGLILALFVGISATVGLMLYA) threads the bilayer. The Periplasmic portion of the chain corresponds to 30 to 161 (LNQNMDLFYT…TEQQKQGTGQ (132 aa)). The heme site is built by His-129 and Tyr-133. The disordered stretch occupies residues 142-161 (MKKTHEPLQYTEQQKQGTGQ). Over residues 151–161 (YTEQQKQGTGQ) the composition is skewed to polar residues.

It belongs to the CcmE/CycJ family.

It localises to the cell inner membrane. Heme chaperone required for the biogenesis of c-type cytochromes. Transiently binds heme delivered by CcmC and transfers the heme to apo-cytochromes in a process facilitated by CcmF and CcmH. The sequence is that of Cytochrome c-type biogenesis protein CcmE from Aliivibrio fischeri (strain MJ11) (Vibrio fischeri).